A 466-amino-acid chain; its full sequence is GATA-binding factor 2 (466 aa).

2 stretches are compositionally biased toward low complexity: residues 139 to 155 (GSST…TPAS) and 174 to 188 (PDPN…SSSA). Residues 139-196 (GSSTSSTASVSSLTPASHSGSHLFGFPPTPPKEVSPDPNSTSAASPSSSAGARQEDKD) form a disordered region. 2 consecutive GATA-type zinc fingers follow at residues 281 to 305 (CVNC…CNAC) and 335 to 359 (CANC…CNAC). The disordered stretch occupies residues 436–466 (GHILPTPTPIHPSSSISFGHPHPSSMVTAMG).

In terms of tissue distribution, expressed in all developmental stages of erythroid cells but is additionally found in a limited subset of other tissues.

The protein localises to the nucleus. In terms of biological role, transcriptional activator which probably serves as a general switch factor for cell-specific development. It binds to DNA sites with the consensus sequence 5'-[AT]GATA[AG]-3' within regulatory regions of genes. The protein is GATA-binding factor 2 (GATA2) of Gallus gallus (Chicken).